A 955-amino-acid polypeptide reads, in one-letter code: 2-oxoglutarate dehydrogenase E1 component (955 aa).

The protein belongs to the alpha-ketoglutarate dehydrogenase family. Homodimer. Part of the 2-oxoglutarate dehydrogenase (OGDH) complex composed of E1 (2-oxoglutarate dehydrogenase), E2 (dihydrolipoamide succinyltransferase) and E3 (dihydrolipoamide dehydrogenase); the complex contains multiple copies of the three enzymatic components (E1, E2 and E3). Requires thiamine diphosphate as cofactor.

It carries out the reaction N(6)-[(R)-lipoyl]-L-lysyl-[protein] + 2-oxoglutarate + H(+) = N(6)-[(R)-S(8)-succinyldihydrolipoyl]-L-lysyl-[protein] + CO2. Its function is as follows. E1 component of the 2-oxoglutarate dehydrogenase (OGDH) complex which catalyzes the decarboxylation of 2-oxoglutarate, the first step in the conversion of 2-oxoglutarate to succinyl-CoA and CO(2). In Bacillus mycoides (strain KBAB4) (Bacillus weihenstephanensis), this protein is 2-oxoglutarate dehydrogenase E1 component.